A 299-amino-acid chain; its full sequence is Homoserine kinase (299 aa).

84 to 94 (PISRGLGSSSA) lines the ATP pocket.

This sequence belongs to the GHMP kinase family. Homoserine kinase subfamily.

It localises to the cytoplasm. It catalyses the reaction L-homoserine + ATP = O-phospho-L-homoserine + ADP + H(+). It participates in amino-acid biosynthesis; L-threonine biosynthesis; L-threonine from L-aspartate: step 4/5. Catalyzes the ATP-dependent phosphorylation of L-homoserine to L-homoserine phosphate. This Helicobacter hepaticus (strain ATCC 51449 / 3B1) protein is Homoserine kinase.